A 539-amino-acid chain; its full sequence is GMP synthase [glutamine-hydrolyzing] (539 aa).

The region spanning 4–202 (KILILDFGSQ…VLGIAGCKPD (199 aa)) is the Glutamine amidotransferase type-1 domain. Cys81 serves as the catalytic Nucleophile. Active-site residues include His176 and Glu178. The GMPS ATP-PPase domain occupies 203 to 395 (WVMRDHIEEA…LGLPPEMVYR (193 aa)). Residue 230 to 236 (SGGVDSS) coordinates ATP.

In terms of assembly, homodimer.

The enzyme catalyses XMP + L-glutamine + ATP + H2O = GMP + L-glutamate + AMP + diphosphate + 2 H(+). It functions in the pathway purine metabolism; GMP biosynthesis; GMP from XMP (L-Gln route): step 1/1. Catalyzes the synthesis of GMP from XMP. In Cupriavidus necator (strain ATCC 17699 / DSM 428 / KCTC 22496 / NCIMB 10442 / H16 / Stanier 337) (Ralstonia eutropha), this protein is GMP synthase [glutamine-hydrolyzing].